The sequence spans 620 residues: Chaperone protein HscA homolog (620 aa).

It belongs to the heat shock protein 70 family.

Functionally, chaperone involved in the maturation of iron-sulfur cluster-containing proteins. Has a low intrinsic ATPase activity which is markedly stimulated by HscB. The polypeptide is Chaperone protein HscA homolog (Pseudomonas entomophila (strain L48)).